The following is a 336-amino-acid chain: DNA-directed RNA polymerase subunit alpha (336 aa).

The tract at residues 1–234 (MIEFVIPKKL…NHFKIVTEGL (234 aa)) is alpha N-terminal domain (alpha-NTD). The tract at residues 269–336 (VYNRKIDELE…KFGLELRKGE (68 aa)) is alpha C-terminal domain (alpha-CTD).

Belongs to the RNA polymerase alpha chain family. Homodimer. The RNAP catalytic core consists of 2 alpha, 1 beta, 1 beta' and 1 omega subunit. When a sigma factor is associated with the core the holoenzyme is formed, which can initiate transcription.

It carries out the reaction RNA(n) + a ribonucleoside 5'-triphosphate = RNA(n+1) + diphosphate. DNA-dependent RNA polymerase catalyzes the transcription of DNA into RNA using the four ribonucleoside triphosphates as substrates. The protein is DNA-directed RNA polymerase subunit alpha of Thermotoga petrophila (strain ATCC BAA-488 / DSM 13995 / JCM 10881 / RKU-1).